A 3412-amino-acid polypeptide reads, in one-letter code: Genome polyprotein (3412 aa).

At 1 to 104 the chain is on the cytoplasmic side; that stretch reads MSGRKAQGKT…LSSRKRRSNE (104 aa). Residues 38-72 are hydrophobic; homodimerization of capsid protein C; the sequence is PGPSRGVQGFIFFFLFNILTGKKLTTHLKRLWRML. The propeptide at 102–121 is ER anchor for the capsid protein C, removed in mature form by serine protease NS3; that stretch reads SNEMAMMPLLILSMVILAGG. A helical transmembrane segment spans residues 105–125; sequence MAMMPLLILSMVILAGGVTLV. Topologically, residues 126–244 are extracellular; that stretch reads RKNRWLLLNV…GERQLQKIER (119 aa). N-linked (GlcNAc...) asparagine; by host glycosylation is found at Asn-134 and Asn-150. The helical transmembrane segment at 245–265 threads the bilayer; it reads WLVRNPFFAITALAIAYLVGN. At 266–270 the chain is on the cytoplasmic side; the sequence is NMTQR. The helical transmembrane segment at 271 to 285 threads the bilayer; sequence VVIALLVLAVGPAYS. At 286 to 730 the chain is on the extracellular side; that stretch reads AHCIGITDRD…TVFGSAFQGL (445 aa). 8 cysteine pairs are disulfide-bonded: Cys-288/Cys-315, Cys-345/Cys-401, Cys-345/Cys-406, Cys-359/Cys-390, Cys-377/Cys-401, Cys-377/Cys-406, Cys-467/Cys-568, and Cys-585/Cys-615. Positions 383-396 are fusion peptide; sequence DRGWGNGCGLFGKG. Residues 731–751 form a helical membrane-spanning segment; that stretch reads FGGLSWITKVIMGAVLIWVGI. Topologically, residues 752–757 are extracellular; the sequence is NTRNMT. The chain crosses the membrane as a helical span at residues 758–778; sequence MSMSMILVGVIMMFLSLGVGA. Topologically, residues 779–1132 are extracellular; that stretch reads DQGCAVNFGK…LVRSWVTAGE (354 aa). 6 disulfides stabilise this stretch: Cys-782-Cys-793, Cys-833-Cys-921, Cys-957-Cys-1002, Cys-1058-Cys-1107, Cys-1069-Cys-1091, and Cys-1090-Cys-1094. N-linked (GlcNAc...) asparagine; by host glycosylation is found at Asn-908 and Asn-986. A helical membrane pass occupies residues 1133-1153; the sequence is VHAVPFGLVSMMIAMEVVLRK. Residues 1154 to 1201 lie on the Cytoplasmic side of the membrane; sequence RQGPKQMLVGGIILLGAMLVGQVTVLDLVKLIVAVGLHFHEINNGGDA. The helical transmembrane segment at 1202-1222 threads the bilayer; it reads MYMALIASFSIRPGLLVGFGL. The Lumenal portion of the chain corresponds to 1223–1287; that stretch reads RTLWSPRERL…VLPLMALLTP (65 aa). A helical membrane pass occupies residues 1288-1308; it reads VTMHEVRMATMLFCTVVIVGV. Residues 1309–1355 lie on the Cytoplasmic side of the membrane; it reads LHQNAKDTSMQKTIPIVALTLTSYMGLTQPFLGLCAYMSTQVFGRRS. A helical transmembrane segment spans residues 1356–1376; that stretch reads IPVNEALAAAGLVGVLAGLAF. Over 1377 to 1378 the chain is Lumenal; that stretch reads QD. Residues 1379–1399 traverse the membrane as a helical segment; sequence MENFLGPIAVGGILMMLVSVA. Over 1400–1456 the chain is Cytoplasmic; that stretch reads GKVDGLELKKLGEVSWEEEAEISGSSSRYDVALSEQGEFKLLSEDKVPWDQIVMTSL. The interacts with and activates NS3 protease stretch occupies residues 1407 to 1446; sequence LKKLGEVSWEEEAEISGSSSRYDVALSEQGEFKLLSEDKV. Residues 1457 to 1477 constitute an intramembrane region (helical); it reads ALVGAAIHPFALLLVLGGWVL. Topologically, residues 1478–2157 are cytoplasmic; it reads HIKGARRSGD…RNALSMMPEA (680 aa). The 181-residue stretch at 1485-1665 folds into the Peptidase S7 domain; sequence SGDVLWDIPT…EVKEESKEEL (181 aa). Residues His-1537, Asp-1561, and Ser-1622 each act as charge relay system; for serine protease NS3 activity in the active site. A Helicase ATP-binding domain is found at 1669–1825; the sequence is PTMLKKGMTT…HSNGEIEDVQ (157 aa). Residues 1673-1676 are important for RNA-binding; that stretch reads KKGM. Position 1682–1689 (1682–1689) interacts with ATP; sequence FHPGAGKT. Residues 1773–1776 carry the DEAH box motif; that stretch reads DEAH. Residues 1820-1997 form the Helicase C-terminal domain; it reads EIEDVQTDIP…VRGGMVAPLY (178 aa). Lys-1877 carries the post-translational modification N6-acetyllysine; by host. A disordered region spans residues 1942 to 1961; sequence AAQRRGRIGRNPNRDGDSYY. The chain crosses the membrane as a helical span at residues 2158–2178; that stretch reads MTIVMLFILAGLLTSGMVIFF. The Lumenal segment spans residues 2179–2186; sequence MSPKGMSR. Positions 2187–2207 form an intramembrane region, helical; the sequence is MSMAMGTMAGSGYLMFLGGVK. At 2208 to 2209 the chain is on the lumenal side; it reads PT. Residues 2210 to 2230 traverse the membrane as a helical segment; sequence HISYVMLIFFVLMVVIIPEPG. Residues 2231–2241 lie on the Cytoplasmic side of the membrane; the sequence is QQRTIQDNQVA. A helical membrane pass occupies residues 2242 to 2262; the sequence is YLIIGILTLLSIVAANELGML. The Lumenal portion of the chain corresponds to 2263–2293; it reads EKTKEDFFGRRNIATSGGTIPWSWPDLDLKP. An intramembrane region (helical) is located at residues 2294–2314; sequence GAAWTVYVGIVTMLSPMLHHW. Over 2315–2360 the chain is Lumenal; sequence IKVEYGNLSLSGIAQSASVLSFMDKGIPFMKMNISVVILLVSGWNS. Residues 2361-2380 form a helical membrane-spanning segment; sequence ITVIPLLCGVGGAMLHWTLI. Over 2381-2421 the chain is Cytoplasmic; the sequence is LPGIKAQQSKLAQKRVFHGVAKNPVVDGNPTADIEEAPEMP. Residues 2422–2442 traverse the membrane as a helical segment; it reads ALYEKKLALYLLLALSLMSVA. Residues 2443–2445 are Lumenal-facing; sequence MCR. A helical transmembrane segment spans residues 2446-2466; the sequence is TPFSLAEGIVLSSAALGPLIE. At 2467-3411 the chain is on the cytoplasmic side; that stretch reads GNTSLLWNGP…VDADLQPGEL (945 aa). The mRNA cap 0-1 NS5-type MT domain occupies 2508–2772; sequence GSASGKTLGE…DVILPIGTRS (265 aa). Ser-2563 lines the S-adenosyl-L-methionine pocket. The residue at position 2563 (Ser-2563) is a Phosphoserine. The active-site For 2'-O-MTase activity is Lys-2568. Residues Gly-2593, Trp-2594, Thr-2611, Leu-2612, Asp-2638, and Ile-2639 each contribute to the S-adenosyl-L-methionine site. The active-site For 2'-O-MTase activity is Asp-2653. Residue Ile-2654 coordinates S-adenosyl-L-methionine. Residues Lys-2689 and Glu-2725 each act as for 2'-O-MTase activity in the active site. Position 2727 (Tyr-2727) interacts with S-adenosyl-L-methionine. Residues 2879–2912 carry the Nuclear localization signal motif; the sequence is RKIMKVVNRWLFRHLAREKNPRLCTKEEFIAKVR. Residues Glu-2946, His-2950, Cys-2955, and Cys-2958 each contribute to the Zn(2+) site. The RdRp catalytic domain occupies 3036-3188; sequence GGFYADDTAG…RPVDDRFGLA (153 aa). His-3223, Cys-3239, and Cys-3358 together coordinate Zn(2+).

This sequence in the N-terminal section; belongs to the class I-like SAM-binding methyltransferase superfamily. mRNA cap 0-1 NS5-type methyltransferase family. As to quaternary structure, homodimer. Interacts (via N-terminus) with host EXOC1 (via C-terminus); this interaction results in EXOC1 degradation through the proteasome degradation pathway. Forms heterodimers with envelope protein E in the endoplasmic reticulum and Golgi. In terms of assembly, homodimer; in the endoplasmic reticulum and Golgi. Interacts with protein prM. Interacts with non-structural protein 1. As to quaternary structure, homodimer; Homohexamer when secreted. Interacts with envelope protein E. Interacts (via N-terminus) with serine protease NS3. In terms of assembly, forms a heterodimer with serine protease NS3. May form homooligomers. As to quaternary structure, forms a heterodimer with NS2B. Interacts with non-structural protein 2A (via N-terminus). Interacts with NS4B. Interacts with unphosphorylated RNA-directed RNA polymerase NS5; this interaction stimulates RNA-directed RNA polymerase NS5 guanylyltransferase activity. NS3 interacts with host PDCD6IP; this interaction contributes to virion release. Interacts with serine protease NS3. In terms of assembly, homodimer. Interacts with host STAT2; this interaction prevents the establishment of cellular antiviral state. Interacts with serine protease NS3. Interacts with host TRIM23; this interaction leads to NS5 ubiquitination. Specific enzymatic cleavages in vivo yield mature proteins. The nascent capsid protein C contains a C-terminal hydrophobic domain that act as a signal sequence for translocation of prM into the lumen of the ER. Mature capsid protein C is cleaved at a site upstream of this hydrophobic domain by NS3. prM is cleaved in post-Golgi vesicles by a host furin, releasing the mature small envelope protein M, and peptide pr. Non-structural protein 2A-alpha, a C-terminally truncated form of non-structural protein 2A, results from partial cleavage by NS3. Specific enzymatic cleavages in vivo yield mature proteins peptide 2K acts as a signal sequence and is removed from the N-terminus of NS4B by the host signal peptidase in the ER lumen. Signal cleavage at the 2K-4B site requires a prior NS3 protease-mediated cleavage at the 4A-2K site. In terms of processing, cleaved in post-Golgi vesicles by a host furin, releasing the mature small envelope protein M, and peptide pr. This cleavage is incomplete as up to 30% of viral particles still carry uncleaved prM. Post-translationally, N-glycosylated. N-glycosylated. The excreted form is glycosylated and this is required for efficient secretion of the protein from infected cells. In terms of processing, polyubiquitinated; ubiquitination is probably mediated by host TRIM23 and is prerequisite for NS5-STAT2 interaction. NS5 is not ISGylated or sumoylated. Post-translationally, acetylated by host KAT5. Acetylation modulates NS3 RNA-binding and unwinding activities and plays an important positive role for viral replication. Phosphorylated on serines residues. This phosphorylation may trigger NS5 nuclear localization.

Its subcellular location is the virion. It localises to the host nucleus. The protein resides in the host cytoplasm. The protein localises to the host perinuclear region. It is found in the secreted. Its subcellular location is the virion membrane. It localises to the host endoplasmic reticulum membrane. The catalysed reaction is Selective hydrolysis of -Xaa-Xaa-|-Yaa- bonds in which each of the Xaa can be either Arg or Lys and Yaa can be either Ser or Ala.. It carries out the reaction RNA(n) + a ribonucleoside 5'-triphosphate = RNA(n+1) + diphosphate. It catalyses the reaction a ribonucleoside 5'-triphosphate + H2O = a ribonucleoside 5'-diphosphate + phosphate + H(+). The enzyme catalyses ATP + H2O = ADP + phosphate + H(+). The catalysed reaction is a 5'-end (5'-triphosphoguanosine)-ribonucleoside in mRNA + S-adenosyl-L-methionine = a 5'-end (N(7)-methyl 5'-triphosphoguanosine)-ribonucleoside in mRNA + S-adenosyl-L-homocysteine. It carries out the reaction a 5'-end (N(7)-methyl 5'-triphosphoguanosine)-ribonucleoside in mRNA + S-adenosyl-L-methionine = a 5'-end (N(7)-methyl 5'-triphosphoguanosine)-(2'-O-methyl-ribonucleoside) in mRNA + S-adenosyl-L-homocysteine + H(+). Plays a role in virus budding by binding to the cell membrane and gathering the viral RNA into a nucleocapsid that forms the core of a mature virus particle. During virus entry, may induce genome penetration into the host cytoplasm after hemifusion induced by the surface proteins. Can migrate to the cell nucleus where it modulates host functions. Functionally, inhibits RNA silencing by interfering with host Dicer. In terms of biological role, prevents premature fusion activity of envelope proteins in trans-Golgi by binding to envelope protein E at pH6.0. After virion release in extracellular space, gets dissociated from E dimers. Its function is as follows. Acts as a chaperone for envelope protein E during intracellular virion assembly by masking and inactivating envelope protein E fusion peptide. prM is the only viral peptide matured by host furin in the trans-Golgi network probably to avoid catastrophic activation of the viral fusion activity in acidic Golgi compartment prior to virion release. prM-E cleavage is inefficient, and many virions are only partially matured. These uncleaved prM would play a role in immune evasion. May play a role in virus budding. Exerts cytotoxic effects by activating a mitochondrial apoptotic pathway through M ectodomain. May display a viroporin activity. Functionally, binds to host cell surface receptor and mediates fusion between viral and cellular membranes. Envelope protein is synthesized in the endoplasmic reticulum in the form of heterodimer with protein prM. They play a role in virion budding in the ER, and the newly formed immature particle is covered with 60 spikes composed of heterodimer between precursor prM and envelope protein E. The virion is transported to the Golgi apparatus where the low pH causes dissociation of PrM-E heterodimers and formation of E homodimers. prM-E cleavage is inefficient, and many virions are only partially matured. These uncleaved prM would play a role in immune evasion. In terms of biological role, involved in immune evasion, pathogenesis and viral replication. Once cleaved off the polyprotein, is targeted to three destinations: the viral replication cycle, the plasma membrane and the extracellular compartment. Essential for viral replication. Required for formation of the replication complex and recruitment of other non-structural proteins to the ER-derived membrane structures. Excreted as a hexameric lipoparticle that plays a role against host immune response. Antagonizing the complement function. Binds to the host macrophages and dendritic cells. Inhibits signal transduction originating from Toll-like receptor 3 (TLR3). Its function is as follows. Component of the viral RNA replication complex that functions in virion assembly and antagonizes the host immune response. Required cofactor for the serine protease function of NS3. May have membrane-destabilizing activity and form viroporins. Functionally, displays three enzymatic activities: serine protease, NTPase and RNA helicase. NS3 serine protease, in association with NS2B, performs its autocleavage and cleaves the polyprotein at dibasic sites in the cytoplasm: C-prM, NS2A-NS2B, NS2B-NS3, NS3-NS4A, NS4A-2K and NS4B-NS5. NS3 RNA helicase binds RNA and unwinds dsRNA in the 3' to 5' direction. Also plays a role in virus assembly. In terms of biological role, regulates the ATPase activity of the NS3 helicase activity. NS4A allows NS3 helicase to conserve energy during unwinding. Its function is as follows. Functions as a signal peptide for NS4B and is required for the interferon antagonism activity of the latter. Induces the formation of ER-derived membrane vesicles where the viral replication takes place. Inhibits interferon (IFN)-induced host STAT1 phosphorylation and nuclear translocation, thereby preventing the establishment of cellular antiviral state by blocking the IFN-alpha/beta pathway. Functionally, replicates the viral (+) and (-) RNA genome, and performs the capping of genomes in the cytoplasm. NS5 methylates viral RNA cap at guanine N-7 and ribose 2'-O positions. Besides its role in RNA genome replication, also prevents the establishment of cellular antiviral state by blocking the interferon-alpha/beta (IFN-alpha/beta) signaling pathway. IFN-I induces binding of NS5 to host IFN-activated transcription factor STAT2, preventing its transcriptional activity. Host TRIM23 is the E3 ligase that interacts with and polyubiquitinates NS5 to promote its binding to STAT2 and trigger IFN-I signaling inhibition. The sequence is that of Genome polyprotein from Yellow fever virus (isolate Ethiopia/Couma/1961) (YFV).